The sequence spans 88 residues: Large ribosomal subunit protein eL37A (88 aa).

Zn(2+) is bound by residues Cys19, Cys22, Cys34, and Cys37. The C4-type zinc finger occupies Cys19–Cys37.

It belongs to the eukaryotic ribosomal protein eL37 family. As to quaternary structure, component of the large ribosomal subunit (LSU). Mature yeast ribosomes consist of a small (40S) and a large (60S) subunit. The 40S small subunit contains 1 molecule of ribosomal RNA (18S rRNA) and 33 different proteins (encoded by 57 genes). The large 60S subunit contains 3 rRNA molecules (25S, 5.8S and 5S rRNA) and 46 different proteins (encoded by 81 genes). The cofactor is Zn(2+).

The protein localises to the cytoplasm. Functionally, component of the ribosome, a large ribonucleoprotein complex responsible for the synthesis of proteins in the cell. The small ribosomal subunit (SSU) binds messenger RNAs (mRNAs) and translates the encoded message by selecting cognate aminoacyl-transfer RNA (tRNA) molecules. The large subunit (LSU) contains the ribosomal catalytic site termed the peptidyl transferase center (PTC), which catalyzes the formation of peptide bonds, thereby polymerizing the amino acids delivered by tRNAs into a polypeptide chain. The nascent polypeptides leave the ribosome through a tunnel in the LSU and interact with protein factors that function in enzymatic processing, targeting, and the membrane insertion of nascent chains at the exit of the ribosomal tunnel. This Saccharomyces cerevisiae (strain ATCC 204508 / S288c) (Baker's yeast) protein is Large ribosomal subunit protein eL37A.